Consider the following 339-residue polypeptide: Non-homologous end joining protein Ku (339 aa).

The 178-residue stretch at 10–187 (ITFGLVNIPV…LPKATTGKPT (178 aa)) folds into the Ku domain. Disordered regions lie at residues 230 to 251 (DSGK…RQGA) and 263 to 339 (SLGQ…KHAA). Residues 267-277 (RGKEDKEDATP) show a composition bias toward basic and acidic residues. A compositionally biased stretch (basic residues) spans 278-289 (ARRKAPARHAAA). Residues 290 to 310 (RKQPAAKRAATPPAKRASTAA) show a composition bias toward low complexity.

It belongs to the prokaryotic Ku family. Homodimer. Interacts with LigD.

In terms of biological role, with LigD forms a non-homologous end joining (NHEJ) DNA repair enzyme, which repairs dsDNA breaks with reduced fidelity. Binds linear dsDNA with 5'- and 3'- overhangs but not closed circular dsDNA nor ssDNA. Recruits and stimulates the ligase activity of LigD. The chain is Non-homologous end joining protein Ku from Cupriavidus necator (strain ATCC 17699 / DSM 428 / KCTC 22496 / NCIMB 10442 / H16 / Stanier 337) (Ralstonia eutropha).